The sequence spans 687 residues: DNA-directed RNA polymerase subunit beta' (687 aa).

4 residues coordinate Zn(2+): C76, C78, C94, and C97. 3 residues coordinate Mg(2+): D496, D498, and D500.

Belongs to the RNA polymerase beta' chain family. RpoC1 subfamily. In plastids the minimal PEP RNA polymerase catalytic core is composed of four subunits: alpha, beta, beta', and beta''. When a (nuclear-encoded) sigma factor is associated with the core the holoenzyme is formed, which can initiate transcription. It depends on Mg(2+) as a cofactor. Zn(2+) serves as cofactor.

The protein localises to the plastid. It is found in the chloroplast. It catalyses the reaction RNA(n) + a ribonucleoside 5'-triphosphate = RNA(n+1) + diphosphate. In terms of biological role, DNA-dependent RNA polymerase catalyzes the transcription of DNA into RNA using the four ribonucleoside triphosphates as substrates. In Ipomoea purpurea (Common morning glory), this protein is DNA-directed RNA polymerase subunit beta'.